Here is a 584-residue protein sequence, read N- to C-terminus: Endoribonuclease YBEY, chloroplastic (584 aa).

Residues 1-50 (MLSRVCPTLRYNRIWSAHAREMPRATLLLLQPNFFHSSPKTALVNRLDVT) constitute a chloroplast transit peptide. Residues His240, His244, and His250 each contribute to the Zn(2+) site.

It belongs to the endoribonuclease YbeY family. It depends on Zn(2+) as a cofactor.

It is found in the plastid. The protein localises to the chloroplast stroma. In terms of biological role, endoribonuclease required for chloroplast ribosomal RNA (rRNA) processing and essential for normal growth and development. May be involved in maturation of both the 5' and 3' ends of 16S, 23S, and 4.5S rRNAs. Cleaves chloroplast rRNAs, mRNAs and tRNAs in vitro. This Arabidopsis thaliana (Mouse-ear cress) protein is Endoribonuclease YBEY, chloroplastic.